The chain runs to 49 residues: U1-theraphotoxin-Lp1b (49 aa).

4 disulfides stabilise this stretch: Cys-4/Cys-17, Cys-8/Cys-41, Cys-22/Cys-24, and Cys-35/Cys-46.

In terms of tissue distribution, expressed by the venom gland.

The protein localises to the secreted. Functionally, toxin that causes irreversible contractile paralysis into adult Aedes aegypti resulting in 100% mortality after 24 hours. The polypeptide is U1-theraphotoxin-Lp1b (Lasiodora parahybana (Brazilian salmon pink birdeater)).